A 2471-amino-acid polypeptide reads, in one-letter code: Probable polyketide synthase 24 (2471 aa).

Residues 21–449 (ENLVAIVGVG…GSNCCLVLSQ (429 aa)) form the Ketosynthase family 3 (KS3) domain. Active-site for beta-ketoacyl synthase activity residues include Cys-190, His-332, and His-372. An acyl/malonyl transferase region spans residues 654–687 (GIKASFMLGHSLGEVTTAYCSGMIDIDQLCYLIY). The active-site For acyl/malonyl transferase activity is the Ser-664. The segment at 953–1075 (ISILGNSMQD…SNFHLNSNDN (123 aa)) is N-terminal hotdog fold. The PKS/mFAS DH domain maps to 953–1245 (ISILGNSMQD…VKSLTPVKDP (293 aa)). The active-site Proton acceptor; for dehydratase activity is the His-987. A C-terminal hotdog fold region spans residues 1094–1245 (NLSSIPWDEF…VKSLTPVKDP (152 aa)). Asp-1157 functions as the Proton donor; for dehydratase activity in the catalytic mechanism. Residues 1426-1469 (IINEQQQQQQQQQQQQQQQQQQQQQLLNNENNKESLKNLLVNCN) adopt a coiled-coil conformation. One can recognise a Carrier domain in the interval 2336 to 2413 (SSSTNVKNKF…MVYQIINDSL (78 aa)). The residue at position 2373 (Ser-2373) is an O-(pantetheine 4'-phosphoryl)serine.

Pantetheine 4'-phosphate is required as a cofactor.

In terms of biological role, probable polyketide synthase. This is Probable polyketide synthase 24 (pks24) from Dictyostelium discoideum (Social amoeba).